The sequence spans 111 residues: Large ribosomal subunit protein uL22 (111 aa).

The protein belongs to the universal ribosomal protein uL22 family. In terms of assembly, part of the 50S ribosomal subunit.

Its function is as follows. This protein binds specifically to 23S rRNA; its binding is stimulated by other ribosomal proteins, e.g. L4, L17, and L20. It is important during the early stages of 50S assembly. It makes multiple contacts with different domains of the 23S rRNA in the assembled 50S subunit and ribosome. In terms of biological role, the globular domain of the protein is located near the polypeptide exit tunnel on the outside of the subunit, while an extended beta-hairpin is found that lines the wall of the exit tunnel in the center of the 70S ribosome. The chain is Large ribosomal subunit protein uL22 from Thermoanaerobacter pseudethanolicus (strain ATCC 33223 / 39E) (Clostridium thermohydrosulfuricum).